The primary structure comprises 246 residues: 14-3-3 protein eta (246 aa).

Gly2 bears the N-acetylglycine mark. Phosphoserine is present on residues Ser25 and Ser59.

This sequence belongs to the 14-3-3 family. Homodimer. Interacts with many nuclear hormone receptors and cofactors including AR, ESR1, ESR2, MC2R, NR3C1, NRIP1, PPARBP and THRA. Interacts with ABL1 (phosphorylated form); the interaction retains it in the cytoplasm. Weakly interacts with CDKN1B. Interacts with ARHGEF28 and CDK16. Interacts with GAB2. Interacts with KCNK18 in a phosphorylation-dependent manner. Interacts with SAMSN1. Interacts with the 'Ser-241' phosphorylated form of PDPK1. Interacts with the 'Thr-369' phosphorylated form of DAPK2. Interacts with PI4KB, TBC1D22A and TBC1D22B. Interacts with SLITRK1. Interacts with MEFV. In terms of processing, phosphorylated on Ser-59 by protein kinase C delta type catalytic subunit in a sphingosine-dependent fashion.

It localises to the cytoplasm. Functionally, adapter protein implicated in the regulation of a large spectrum of both general and specialized signaling pathways. Binds to a large number of partners, usually by recognition of a phosphoserine or phosphothreonine motif. Binding generally results in the modulation of the activity of the binding partner. Negatively regulates the kinase activity of PDPK1. This is 14-3-3 protein eta (YWHAH) from Bos taurus (Bovine).